We begin with the raw amino-acid sequence, 369 residues long: Anhydro-N-acetylmuramic acid kinase (369 aa).

Position 12-19 (12-19 (GTSLDGVD)) interacts with ATP.

It belongs to the anhydro-N-acetylmuramic acid kinase family.

It catalyses the reaction 1,6-anhydro-N-acetyl-beta-muramate + ATP + H2O = N-acetyl-D-muramate 6-phosphate + ADP + H(+). It participates in amino-sugar metabolism; 1,6-anhydro-N-acetylmuramate degradation. It functions in the pathway cell wall biogenesis; peptidoglycan recycling. Catalyzes the specific phosphorylation of 1,6-anhydro-N-acetylmuramic acid (anhMurNAc) with the simultaneous cleavage of the 1,6-anhydro ring, generating MurNAc-6-P. Is required for the utilization of anhMurNAc either imported from the medium or derived from its own cell wall murein, and thus plays a role in cell wall recycling. This Shigella boydii serotype 4 (strain Sb227) protein is Anhydro-N-acetylmuramic acid kinase.